The following is a 666-amino-acid chain: DNA ligase (666 aa).

NAD(+) contacts are provided by residues D31–D35, S80–L81, and E111. K113 acts as the N6-AMP-lysine intermediate in catalysis. 4 residues coordinate NAD(+): R134, E170, K285, and K309. C403, C406, C421, and C427 together coordinate Zn(2+). A BRCT domain is found at V587–S666.

Belongs to the NAD-dependent DNA ligase family. LigA subfamily. The cofactor is Mg(2+). Mn(2+) serves as cofactor.

The enzyme catalyses NAD(+) + (deoxyribonucleotide)n-3'-hydroxyl + 5'-phospho-(deoxyribonucleotide)m = (deoxyribonucleotide)n+m + AMP + beta-nicotinamide D-nucleotide.. DNA ligase that catalyzes the formation of phosphodiester linkages between 5'-phosphoryl and 3'-hydroxyl groups in double-stranded DNA using NAD as a coenzyme and as the energy source for the reaction. It is essential for DNA replication and repair of damaged DNA. The polypeptide is DNA ligase (Flavobacterium psychrophilum (strain ATCC 49511 / DSM 21280 / CIP 103535 / JIP02/86)).